The primary structure comprises 206 residues: MAAALLRELGALRVPNLRIWATQTLRVLPPSCIHTSASLDISRKWEKKNKIVYPPQLPGEPRRPAEIYHCRRQIKYSKDKMWYLAKMIRGMSIDQALAQLEFNDKKGAQIIKEVLLEAQDMAVRDHNVEFRSNLHIAESTSGRGQCLKRIRYHGRGRFGIMEKVYCHYFVKLVEGPPPPPEVPKTAVDHAKDYIQQLRSRTIIHTL.

The transit peptide at 1–40 directs the protein to the mitochondrion; that stretch reads MAAALLRELGALRVPNLRIWATQTLRVLPPSCIHTSASLD.

Belongs to the universal ribosomal protein uL22 family. Component of the mitochondrial ribosome large subunit (39S) which comprises a 16S rRNA and about 50 distinct proteins.

The protein resides in the mitochondrion. The chain is Large ribosomal subunit protein uL22m (Mrpl22) from Mus musculus (Mouse).